A 209-amino-acid chain; its full sequence is Vacuolar protein sorting-associated protein 28 homolog (209 aa).

One can recognise a VPS28 N-terminal domain in the interval 1–105 (MSQNSNLMRE…REGRPITVKD (105 aa)). The 97-residue stretch at 109-205 (NVLKHIASIV…AYQSFQKALN (97 aa)) folds into the VPS28 C-terminal domain.

This sequence belongs to the VPS28 family. In terms of assembly, component of the ESCRT-I complex (endosomal sorting complex required for transport I).

The protein localises to the endosome. Component of the ESCRT-I complex, a regulator of vesicular trafficking process. This chain is Vacuolar protein sorting-associated protein 28 homolog, found in Caenorhabditis briggsae.